A 170-amino-acid polypeptide reads, in one-letter code: Putative 5'(3')-deoxyribonucleotidase (170 aa).

Asp-28 serves as the catalytic Nucleophile. Residues Asp-28, Asp-30, and Asp-134 each contribute to the Mg(2+) site. Catalysis depends on Asp-30, which acts as the Proton donor.

It belongs to the 5'(3')-deoxyribonucleotidase family. Mg(2+) is required as a cofactor.

Dephosphorylates the 5' and 2'(3')-phosphates of deoxyribonucleotides. The protein is Putative 5'(3')-deoxyribonucleotidase of Vibrio parahaemolyticus (KVP40).